Reading from the N-terminus, the 119-residue chain is MVRISKPKTFQAYLDDCHRRYSCAHCRAHLANHDDLISKSFQGSQGRAYLFNSVVNVGCGPAEERVLLTGLHAVADIHCENCKTTLGWKYEQAFESSQKYKEGKYIIELNHMIKDNGWD.

One can recognise a Yippee domain in the interval 19-116 (RRYSCAHCRA…IELNHMIKDN (98 aa)). The Zn(2+) site is built by Cys23, Cys26, Cys79, and Cys82.

The protein belongs to the yippee family. In terms of processing, probably ubiquitinated leading to its degradation by the proteasome.

It is found in the nucleus. The protein localises to the nucleolus. In terms of biological role, involved in proliferation and apoptosis in myeloid precursor cells. The protein is Protein yippee-like 3 (YPEL3) of Bos taurus (Bovine).